We begin with the raw amino-acid sequence, 89 residues long: Small ribosomal subunit protein uS15 (89 aa).

This sequence belongs to the universal ribosomal protein uS15 family. As to quaternary structure, part of the 30S ribosomal subunit. Forms a bridge to the 50S subunit in the 70S ribosome, contacting the 23S rRNA.

Functionally, one of the primary rRNA binding proteins, it binds directly to 16S rRNA where it helps nucleate assembly of the platform of the 30S subunit by binding and bridging several RNA helices of the 16S rRNA. In terms of biological role, forms an intersubunit bridge (bridge B4) with the 23S rRNA of the 50S subunit in the ribosome. This Gloeobacter violaceus (strain ATCC 29082 / PCC 7421) protein is Small ribosomal subunit protein uS15.